Consider the following 65-residue polypeptide: Large ribosomal subunit protein bL35 (65 aa).

This sequence belongs to the bacterial ribosomal protein bL35 family.

The chain is Large ribosomal subunit protein bL35 from Caldicellulosiruptor bescii (strain ATCC BAA-1888 / DSM 6725 / KCTC 15123 / Z-1320) (Anaerocellum thermophilum).